The primary structure comprises 66 residues: ATP synthase subunit c (66 aa).

2 helical membrane-spanning segments follow: residues 3 to 23 (LTFFGLCLACMGVSLAEGMLM) and 45 to 65 (IMGIAFIEGTFLVTLVFSFVI).

It belongs to the ATPase C chain family. In terms of assembly, F-type ATPases have 2 components, F(1) - the catalytic core - and F(0) - the membrane proton channel. F(1) has five subunits: alpha(3), beta(3), gamma(1), delta(1), epsilon(1). F(0) has three main subunits: a(1), b(2) and c(10-14). The alpha and beta chains form an alternating ring which encloses part of the gamma chain. F(1) is attached to F(0) by a central stalk formed by the gamma and epsilon chains, while a peripheral stalk is formed by the delta and b chains.

Its subcellular location is the cell membrane. In terms of biological role, f(1)F(0) ATP synthase produces ATP from ADP in the presence of a proton or sodium gradient. F-type ATPases consist of two structural domains, F(1) containing the extramembraneous catalytic core and F(0) containing the membrane proton channel, linked together by a central stalk and a peripheral stalk. During catalysis, ATP synthesis in the catalytic domain of F(1) is coupled via a rotary mechanism of the central stalk subunits to proton translocation. Key component of the F(0) channel; it plays a direct role in translocation across the membrane. A homomeric c-ring of between 10-14 subunits forms the central stalk rotor element with the F(1) delta and epsilon subunits. This Streptococcus oralis protein is ATP synthase subunit c (atpE).